The primary structure comprises 515 residues: Nectin-1 (515 aa).

The first 30 residues, 1 to 30 (MARMGLAGAAGRWWGLALGLTAFFLPGAHT), serve as a signal peptide directing secretion. In terms of domain architecture, Ig-like V-type spans 31-141 (QVVQVNDSMY…GNRESQLNLT (111 aa)). Residues 31 to 355 (QVVQVNDSMY…GRRAGQVPTA (325 aa)) lie on the Extracellular side of the membrane. Residues asparagine 36, asparagine 72, asparagine 139, asparagine 202, asparagine 286, asparagine 297, asparagine 307, and asparagine 332 are each glycosylated (N-linked (GlcNAc...) asparagine). Cysteine 51 and cysteine 124 are joined by a disulfide. Ig-like C2-type domains follow at residues 145 to 243 (KPTN…TLNV) and 247 to 334 (PEVT…VNIT). Cystine bridges form between cysteine 172-cysteine 226 and cysteine 269-cysteine 316. The segment at 282–299 (WTTLNGSLPKGVEAQNRT) is interaction with FGFR. The chain crosses the membrane as a helical span at residues 356-376 (IIGGVVGSILLVLFVVGGIVV). Residues 377–515 (ALCRRRHTFK…SFISKKEWYV (139 aa)) lie on the Cytoplasmic side of the membrane. The disordered stretch occupies residues 400–486 (YSKAGIPQHH…DGYGDRTLGY (87 aa)). Residues serine 422, serine 434, and serine 435 each carry the phosphoserine modification. Tyrosine 436 carries the post-translational modification Phosphotyrosine. The span at 436–445 (YEEEEEEEGG) shows a compositional bias: acidic residues. Residues 446–464 (GGERKVGGPHPKYDEDAKR) show a composition bias toward basic and acidic residues. Serine 509 is subject to Phosphoserine.

It belongs to the nectin family. (Microbial infection) Interacts with herpes pseudorabies virus/PRV envelope glycoprotein D.

It localises to the cell membrane. The protein resides in the cell junction. It is found in the adherens junction. Its subcellular location is the presynaptic cell membrane. Functionally, (Microbial infection) Acts as a receptor for herpes simplex virus 1/HHV-1, herpes simplex virus 2/HHV-2, and pseudorabies virus/PRV. The protein is Nectin-1 of Sus scrofa (Pig).